The sequence spans 452 residues: COBRA-like protein 1 (452 aa).

A signal peptide spans 1 to 33; that stretch reads MGFFLCSSSSIFFKFGISIIFLVSFSGLTPSEA. Residues Asn-42, Asn-167, Asn-175, Asn-214, Asn-239, Asn-254, Asn-323, Asn-338, and Asn-357 are each glycosylated (N-linked (GlcNAc...) asparagine). The GPI-anchor amidated serine moiety is linked to residue Ser-432. Positions 433–452 are cleaved as a propeptide — removed in mature form; the sequence is VGSLFAAMALLLIVFLHGNL.

Belongs to the COBRA family. Expressed in roots, stems, leaves, flowers and siliques.

It is found in the cell membrane. The polypeptide is COBRA-like protein 1 (COBL1) (Arabidopsis thaliana (Mouse-ear cress)).